The primary structure comprises 149 residues: Large ribosomal subunit protein uL15 (149 aa).

A disordered region spans residues Met1–Leu61. The span at Thr30 to Lys39 shows a compositional bias: basic residues.

Belongs to the universal ribosomal protein uL15 family. Part of the 50S ribosomal subunit.

In terms of biological role, binds to the 23S rRNA. The protein is Large ribosomal subunit protein uL15 of Trichlorobacter lovleyi (strain ATCC BAA-1151 / DSM 17278 / SZ) (Geobacter lovleyi).